Here is a 368-residue protein sequence, read N- to C-terminus: Chorismate synthase (368 aa).

R46 contributes to the NADP(+) binding site. FMN-binding positions include 124 to 126 (RAS), G284, 299 to 303 (KPTPS), and R326.

The protein belongs to the chorismate synthase family. It depends on FMNH2 as a cofactor.

It catalyses the reaction 5-O-(1-carboxyvinyl)-3-phosphoshikimate = chorismate + phosphate. The protein operates within metabolic intermediate biosynthesis; chorismate biosynthesis; chorismate from D-erythrose 4-phosphate and phosphoenolpyruvate: step 7/7. Functionally, catalyzes the anti-1,4-elimination of the C-3 phosphate and the C-6 proR hydrogen from 5-enolpyruvylshikimate-3-phosphate (EPSP) to yield chorismate, which is the branch point compound that serves as the starting substrate for the three terminal pathways of aromatic amino acid biosynthesis. This reaction introduces a second double bond into the aromatic ring system. This is Chorismate synthase from Pyrobaculum arsenaticum (strain DSM 13514 / JCM 11321 / PZ6).